A 737-amino-acid chain; its full sequence is Delta and Notch-like epidermal growth factor-related receptor (737 aa).

The N-terminal stretch at 1–25 is a signal peptide; it reads MPPRRAQAPGAPLLPVLALLPLLLG. Residues 26–640 lie on the Extracellular side of the membrane; it reads AGPQSGCLAS…LTNMPRHSLY (615 aa). EGF-like domains are found at residues 44-92 and 94-133; these read APGP…TYCQ and VADPCASNPCHHGNCSSSSSSSSDSYLCICNDGYEGLNCE. Residues 44-133 are interaction with NOTCH1; that stretch reads APGPCASQPC…NDGYEGLNCE (90 aa). Disulfide bonds link cysteine 48–cysteine 59, cysteine 53–cysteine 80, cysteine 82–cysteine 91, cysteine 98–cysteine 108, cysteine 103–cysteine 121, and cysteine 123–cysteine 132. Asparagine 204 carries N-linked (GlcNAc...) asparagine glycosylation. EGF-like domains follow at residues 309–348, 349–390, 392–428, 430–466, and 468–503; these read PGDSHSNDLECSGKGKCATKPSEATFSCTCQDQYIGTFCE, EFDA…ELCQ, KIDYCVLDPCRNGATCVSSLSGFTCQCLEGYFGSACE, KVDPCMSSPCQNNGTCYVDGVHFTCSCSPGFTGPTCA, and LVDFCALSPCAHGMCRSVGTSYKCLCDPGYHGLYCE. Cystine bridges form between cysteine 319/cysteine 336, cysteine 338/cysteine 347, cysteine 353/cysteine 364, cysteine 358/cysteine 378, cysteine 380/cysteine 389, cysteine 396/cysteine 407, cysteine 401/cysteine 416, cysteine 418/cysteine 427, cysteine 434/cysteine 445, cysteine 439/cysteine 454, cysteine 456/cysteine 465, cysteine 472/cysteine 482, cysteine 477/cysteine 491, cysteine 493/cysteine 502, cysteine 509/cysteine 520, cysteine 514/cysteine 529, cysteine 531/cysteine 540, cysteine 547/cysteine 558, cysteine 552/cysteine 567, cysteine 569/cysteine 578, cysteine 585/cysteine 596, cysteine 590/cysteine 605, and cysteine 607/cysteine 616. One can recognise an EGF-like 8; calcium-binding domain in the interval 505–541; that stretch reads EYNECLSAPCLNAATCRDLINGYECVCLAEYKGTHCE. The 37-residue stretch at 543 to 579 folds into the EGF-like 9 domain; sequence YKDPCANISCLNGGTCDSEGLNGTCICAPGFTGEECD. Asparagine 564 is a glycosylation site (N-linked (GlcNAc...) asparagine). One can recognise an EGF-like 10; calcium-binding domain in the interval 581–617; it reads DINECDSNPCHHAGTCLDQPNGYTCHCPHGWVGANCE. Residues 641-661 traverse the membrane as a helical segment; the sequence is IIIGALCVAFILMLIILIVGI. Residues 662-737 lie on the Cytoplasmic side of the membrane; sequence CRISRIEYQG…LVTLIKTKDL (76 aa). The segment at 677–680 is interaction with AP1G1 and somatodendritic targeting; it reads YEEF. At serine 685 the chain carries Phosphoserine. The residue at position 711 (tyrosine 711) is a Phosphotyrosine. Residue threonine 714 is modified to Phosphothreonine. Tyrosine 721 is subject to Phosphotyrosine. Serine 722 carries the phosphoserine modification.

As to quaternary structure, interacts with AP1G1. Interacts with NOTCH1. Post-translationally, N-glycosylated. In terms of tissue distribution, specifically expressed in brain neurons (at protein level).

It is found in the cell membrane. In terms of biological role, mediates neuron-glia interaction during astrocytogenesis. May promote differentiation of Bergmann glia during cerebellar development by activating DELTEX-dependent NOTCH1 signaling. The chain is Delta and Notch-like epidermal growth factor-related receptor (Dner) from Mus musculus (Mouse).